Consider the following 342-residue polypeptide: Putative ABC transporter anion-binding protein HVO_1888 (342 aa).

The segment at residues 1–32 (MAIERRRFLQAAGVGAVLGLSGCTGNTSPPQA) is a signal peptide (tat-type signal). The span at 24–37 (TGNTSPPQANNETA) shows a compositional bias: polar residues. Positions 24–52 (TGNTSPPQANNETAEGSGGSESGDGSTQE) are disordered.

In terms of assembly, the complex is composed of two ATP-binding proteins (HVO_1886), two transmembrane proteins (HVO_1887) and a solute-binding protein (HVO_1888). Post-translationally, predicted to be exported by the Tat system. The position of the signal peptide cleavage has not been experimentally proven.

Part of an ABC transporter complex involved in anions import. The sequence is that of Putative ABC transporter anion-binding protein HVO_1888 from Haloferax volcanii (strain ATCC 29605 / DSM 3757 / JCM 8879 / NBRC 14742 / NCIMB 2012 / VKM B-1768 / DS2) (Halobacterium volcanii).